A 258-amino-acid polypeptide reads, in one-letter code: Ribosomal RNA large subunit methyltransferase E (258 aa).

5 residues coordinate S-adenosyl-L-methionine: Gly-58, Trp-60, Asp-78, Asp-96, and Asp-120. Lys-160 functions as the Proton acceptor in the catalytic mechanism.

This sequence belongs to the class I-like SAM-binding methyltransferase superfamily. RNA methyltransferase RlmE family.

The protein localises to the cytoplasm. The catalysed reaction is uridine(2552) in 23S rRNA + S-adenosyl-L-methionine = 2'-O-methyluridine(2552) in 23S rRNA + S-adenosyl-L-homocysteine + H(+). In terms of biological role, specifically methylates the uridine in position 2552 of 23S rRNA at the 2'-O position of the ribose in the fully assembled 50S ribosomal subunit. The polypeptide is Ribosomal RNA large subunit methyltransferase E (Methanococcus maripaludis (strain DSM 14266 / JCM 13030 / NBRC 101832 / S2 / LL)).